The primary structure comprises 299 residues: DNA repair protein RecO (299 aa).

Residues 1-62 form a disordered region; it reads MTLNSDADPD…GRRAPRTPAS (62 aa). A compositionally biased stretch (low complexity) spans 25-41; sequence ASKPARSTRKSSSAKSA.

Belongs to the RecO family.

In terms of biological role, involved in DNA repair and RecF pathway recombination. This is DNA repair protein RecO from Paraburkholderia xenovorans (strain LB400).